Consider the following 258-residue polypeptide: NAD(P)H-hydrate epimerase (258 aa).

The 230-residue stretch at 15 to 244 (AFQLDQELMS…RIAKEYGIED (230 aa)) folds into the YjeF N-terminal domain. 75-79 (NNGGD) is a binding site for (6S)-NADPHX. 2 residues coordinate K(+): asparagine 76 and aspartate 145. (6S)-NADPHX contacts are provided by residues 149 to 155 (GFSFKPP) and aspartate 181. A K(+)-binding site is contributed by serine 184.

This sequence belongs to the NnrE/AIBP family. It depends on K(+) as a cofactor.

The protein resides in the cytoplasm. It localises to the mitochondrion. It catalyses the reaction (6R)-NADHX = (6S)-NADHX. It carries out the reaction (6R)-NADPHX = (6S)-NADPHX. Catalyzes the epimerization of the S- and R-forms of NAD(P)HX, a damaged form of NAD(P)H that is a result of enzymatic or heat-dependent hydration. This is a prerequisite for the S-specific NAD(P)H-hydrate dehydratase to allow the repair of both epimers of NAD(P)HX. The protein is NAD(P)H-hydrate epimerase of Candida albicans (strain WO-1) (Yeast).